Reading from the N-terminus, the 262-residue chain is Hemin import ATP-binding protein HmuV (262 aa).

The ABC transporter domain maps to 2 to 241 (IRASDISVRL…ETMEAVFGCR (240 aa)). Residue 34 to 41 (GPNGSGKT) coordinates ATP.

The protein belongs to the ABC transporter superfamily. Heme (hemin) importer (TC 3.A.1.14.5) family. The complex is composed of two ATP-binding proteins (HmuV), two transmembrane proteins (HmuU) and a solute-binding protein (HmuT).

It is found in the cell inner membrane. Part of the ABC transporter complex HmuTUV involved in hemin import. Responsible for energy coupling to the transport system. This chain is Hemin import ATP-binding protein HmuV, found in Rhizobium meliloti (strain 1021) (Ensifer meliloti).